We begin with the raw amino-acid sequence, 674 residues long: L-type lectin-domain containing receptor kinase SIT1 (674 aa).

A signal peptide spans 1 to 27; it reads MRRPELIMRSLPLILFLSLGSFHLAAA. The Extracellular portion of the chain corresponds to 28–301; sequence AVDDQFTFDG…IARAPSNVLK (274 aa). The segment at 31–275 is legume-lectin like; it reads DQFTFDGFAG…VLAWSFKMDG (245 aa). N-linked (GlcNAc...) asparagine glycosylation is found at Asn42, Asn61, Asn143, Asn196, Asn219, Asn240, and Asn281. The helical transmembrane segment at 302 to 322 threads the bilayer; the sequence is ILLPIASAALVSALAIAVLVI. Over 323–674 the chain is Cytoplasmic; the sequence is HRRRRRYAEL…GNISDIPRAR (352 aa). Residues 357–636 form the Protein kinase domain; sequence FSDERLLGFG…LDGAMPLPEL (280 aa). ATP contacts are provided by residues 363 to 371 and Lys386; that span reads LGFGGFGRV. The active-site Proton acceptor is Asp482. Phosphothreonine occurs at positions 511, 515, 516, and 521.

It in the C-terminal section; belongs to the protein kinase superfamily. Ser/Thr protein kinase family. The protein in the N-terminal section; belongs to the leguminous lectin family. Interacts with B'KAPPA. In terms of processing, autophosphorylated at Thr-511, Thr-515 or Thr-516, and Thr-521 in response to salt stress. Dephosphorylated by phosphatase 2A in response to salt stress. In terms of tissue distribution, expressed in root epidermal cells.

It localises to the cell membrane. It carries out the reaction L-seryl-[protein] + ATP = O-phospho-L-seryl-[protein] + ADP + H(+). It catalyses the reaction L-threonyl-[protein] + ATP = O-phospho-L-threonyl-[protein] + ADP + H(+). Activated by autophosphorylation in response to salt stress. Lectin-domain containing receptor kinase involved in salt stress response. Acts as a negative regulator of salt tolerance. Mediates salt sensitivity by phosphorylating and activating MPK3 and MPK6. Promotes ethylene production and mediates salt-induced ethylene signaling. Promotes the accumulation of reactive oxygen species (ROS) under salt stress conditions. Its kinase activity is triggered by salt stress and is required for its function in salt stress response. Phosphorylates B'KAPPA, a B regulatory subunit of phosphatase 2A (PP2A). The polypeptide is L-type lectin-domain containing receptor kinase SIT1 (Oryza sativa subsp. japonica (Rice)).